We begin with the raw amino-acid sequence, 240 residues long: Biosynthetic peptidoglycan transglycosylase (240 aa).

The chain crosses the membrane as a helical span at residues 16–36; it reads VLMALLCLFLIYELAMFSMVV.

It belongs to the glycosyltransferase 51 family.

The protein localises to the cell inner membrane. The enzyme catalyses [GlcNAc-(1-&gt;4)-Mur2Ac(oyl-L-Ala-gamma-D-Glu-L-Lys-D-Ala-D-Ala)](n)-di-trans,octa-cis-undecaprenyl diphosphate + beta-D-GlcNAc-(1-&gt;4)-Mur2Ac(oyl-L-Ala-gamma-D-Glu-L-Lys-D-Ala-D-Ala)-di-trans,octa-cis-undecaprenyl diphosphate = [GlcNAc-(1-&gt;4)-Mur2Ac(oyl-L-Ala-gamma-D-Glu-L-Lys-D-Ala-D-Ala)](n+1)-di-trans,octa-cis-undecaprenyl diphosphate + di-trans,octa-cis-undecaprenyl diphosphate + H(+). Its pathway is cell wall biogenesis; peptidoglycan biosynthesis. Its function is as follows. Peptidoglycan polymerase that catalyzes glycan chain elongation from lipid-linked precursors. The chain is Biosynthetic peptidoglycan transglycosylase from Bordetella avium (strain 197N).